The primary structure comprises 433 residues: E3 ubiquitin-protein ligase RNF26 (433 aa).

5 consecutive transmembrane segments (helical) span residues Leu-24–Tyr-44, Gly-60–Leu-80, Val-147–Leu-169, Val-183–Trp-203, and Leu-220–Val-240. The segment at Cys-380–Arg-422 adopts an RING-type zinc-finger fold.

As to quaternary structure, interacts with INCA1. Interacts with TMEM43, ENDOD1, TMEM33 and TMED1 to form a complex capable of modulating innate immune signaling through the cGAS-STING pathway. Interacts with UBE2J1; this interaction is important for SQSTM1 ubiquitination. In terms of tissue distribution, ubiquitous. Up-regulated in several cancer cell lines.

The protein resides in the endoplasmic reticulum membrane. The enzyme catalyses S-ubiquitinyl-[E2 ubiquitin-conjugating enzyme]-L-cysteine + [acceptor protein]-L-lysine = [E2 ubiquitin-conjugating enzyme]-L-cysteine + N(6)-ubiquitinyl-[acceptor protein]-L-lysine.. The protein operates within protein modification; protein ubiquitination. Functionally, E3 ubiquitin-protein ligase that plays a key role in endosome organization by retaining vesicles in the perinuclear cloud. Acts as a platform for perinuclear positioning of the endosomal system by mediating ubiquitination of SQSTM1 through interaction with the ubiquitin conjugating enzyme UBE2J1. Ubiquitinated SQSTM1 attracts specific vesicle-associated adapters, forming a molecular bridge that restrains cognate vesicles in the perinuclear region and organizes the endosomal pathway for efficient cargo transport. Also acts as a regulator of type I interferon production in response to viral infection by mediating the formation of 'Lys-11'-linked polyubiquitin chains on TMEM173/STING, leading to stabilize TMEM173/STING. Also required to limit type I interferon response by promoting autophagic degradation of IRF3. The polypeptide is E3 ubiquitin-protein ligase RNF26 (Homo sapiens (Human)).